We begin with the raw amino-acid sequence, 100 residues long: NADH-quinone oxidoreductase subunit K (100 aa).

The next 3 membrane-spanning stretches (helical) occupy residues L4 to I24, I29 to F49, and I60 to V80.

It belongs to the complex I subunit 4L family. NDH-1 is composed of 14 different subunits. Subunits NuoA, H, J, K, L, M, N constitute the membrane sector of the complex.

It localises to the cell inner membrane. It carries out the reaction a quinone + NADH + 5 H(+)(in) = a quinol + NAD(+) + 4 H(+)(out). Its function is as follows. NDH-1 shuttles electrons from NADH, via FMN and iron-sulfur (Fe-S) centers, to quinones in the respiratory chain. The immediate electron acceptor for the enzyme in this species is believed to be ubiquinone. Couples the redox reaction to proton translocation (for every two electrons transferred, four hydrogen ions are translocated across the cytoplasmic membrane), and thus conserves the redox energy in a proton gradient. This chain is NADH-quinone oxidoreductase subunit K, found in Thermodesulfovibrio yellowstonii (strain ATCC 51303 / DSM 11347 / YP87).